A 567-amino-acid chain; its full sequence is MDTINTHQQHVIGLDFGSDSVRALIVNAETGQEVSSSVVYYSRWMKGLYCQPAQSQFRHHPQDYLDAMTSAIQEVLATVPQTLADSVVGIGVDTTGSTPAPIDENGTVLALLPEFEHNPNAMFVLWKDHTSVAKADRINELAHSGKFTDYTRYVGGVYSSEWFWAKAAWVSEQDEQVAKRAFSWVELCDWIPAILADTQHPQKLRRGICAAGHKAMWHESWGGLPEQAFLSAISPTLDGIRDRMFTEVFTSDQAAGYLSKAWAIKLGLPEGIAIAIGEFDCHMGAVGAGAGANDLVKVIGTSTCDILMVESQNVGDRTIHGICGQVEGSAMPELLALEAGQSAFGDMYAWFKNVLMWPLQAYAEHNPDFALTAEEIASELLPMLSQAAEQQGIDQYTPVAMDWLNGRRTPYANQRLKGAICDLNLGSSSPAIFSALVESTAHGAKAIVDCFIEQDVTVERVIAIGGIAQKSPYVMQMCADVIGRDIIVVESDQCCALGAAIFAAVAAGVYPTTKSAQAVMASPVRQTYSPTPKVQTLRAQRYATYRELGQHMEQIAEFHQSQEREDV.

The protein belongs to the ribulokinase family.

It carries out the reaction D-ribulose + ATP = D-ribulose 5-phosphate + ADP + H(+). The catalysed reaction is L-ribulose + ATP = L-ribulose 5-phosphate + ADP + H(+). The protein operates within carbohydrate degradation; L-arabinose degradation via L-ribulose; D-xylulose 5-phosphate from L-arabinose (bacterial route): step 2/3. The sequence is that of Ribulokinase from Vibrio parahaemolyticus serotype O3:K6 (strain RIMD 2210633).